Consider the following 209-residue polypeptide: Thiamine-phosphate synthase 1 (209 aa).

4-amino-2-methyl-5-(diphosphooxymethyl)pyrimidine-binding positions include 39 to 43 (QFREK) and Asn74. Mg(2+)-binding residues include Asp75 and Asp94. Ser112 contributes to the 4-amino-2-methyl-5-(diphosphooxymethyl)pyrimidine binding site. A 2-[(2R,5Z)-2-carboxy-4-methylthiazol-5(2H)-ylidene]ethyl phosphate-binding site is contributed by 138-140 (TQS). Lys141 provides a ligand contact to 4-amino-2-methyl-5-(diphosphooxymethyl)pyrimidine. Residues Gly170 and 190 to 191 (IS) each bind 2-[(2R,5Z)-2-carboxy-4-methylthiazol-5(2H)-ylidene]ethyl phosphate.

This sequence belongs to the thiamine-phosphate synthase family. It depends on Mg(2+) as a cofactor.

It carries out the reaction 2-[(2R,5Z)-2-carboxy-4-methylthiazol-5(2H)-ylidene]ethyl phosphate + 4-amino-2-methyl-5-(diphosphooxymethyl)pyrimidine + 2 H(+) = thiamine phosphate + CO2 + diphosphate. It catalyses the reaction 2-(2-carboxy-4-methylthiazol-5-yl)ethyl phosphate + 4-amino-2-methyl-5-(diphosphooxymethyl)pyrimidine + 2 H(+) = thiamine phosphate + CO2 + diphosphate. The catalysed reaction is 4-methyl-5-(2-phosphooxyethyl)-thiazole + 4-amino-2-methyl-5-(diphosphooxymethyl)pyrimidine + H(+) = thiamine phosphate + diphosphate. Its pathway is cofactor biosynthesis; thiamine diphosphate biosynthesis; thiamine phosphate from 4-amino-2-methyl-5-diphosphomethylpyrimidine and 4-methyl-5-(2-phosphoethyl)-thiazole: step 1/1. In terms of biological role, condenses 4-methyl-5-(beta-hydroxyethyl)thiazole monophosphate (THZ-P) and 2-methyl-4-amino-5-hydroxymethyl pyrimidine pyrophosphate (HMP-PP) to form thiamine monophosphate (TMP). This chain is Thiamine-phosphate synthase 1, found in Streptococcus pneumoniae (strain ATCC BAA-255 / R6).